A 256-amino-acid polypeptide reads, in one-letter code: Type III pantothenate kinase (256 aa).

An ATP-binding site is contributed by 6 to 13; the sequence is DIGNTNIV. 107–110 contributes to the substrate binding site; the sequence is GADI. Catalysis depends on aspartate 109, which acts as the Proton acceptor. Aspartate 129 lines the K(+) pocket. Position 132 (threonine 132) interacts with ATP. Threonine 184 serves as a coordination point for substrate.

The protein belongs to the type III pantothenate kinase family. In terms of assembly, homodimer. It depends on NH4(+) as a cofactor. K(+) serves as cofactor.

Its subcellular location is the cytoplasm. It carries out the reaction (R)-pantothenate + ATP = (R)-4'-phosphopantothenate + ADP + H(+). It functions in the pathway cofactor biosynthesis; coenzyme A biosynthesis; CoA from (R)-pantothenate: step 1/5. Functionally, catalyzes the phosphorylation of pantothenate (Pan), the first step in CoA biosynthesis. This Bifidobacterium longum (strain DJO10A) protein is Type III pantothenate kinase.